We begin with the raw amino-acid sequence, 360 residues long: Aminomethyltransferase (360 aa).

The protein belongs to the GcvT family. In terms of assembly, the glycine cleavage system is composed of four proteins: P, T, L and H.

The catalysed reaction is N(6)-[(R)-S(8)-aminomethyldihydrolipoyl]-L-lysyl-[protein] + (6S)-5,6,7,8-tetrahydrofolate = N(6)-[(R)-dihydrolipoyl]-L-lysyl-[protein] + (6R)-5,10-methylene-5,6,7,8-tetrahydrofolate + NH4(+). Its function is as follows. The glycine cleavage system catalyzes the degradation of glycine. The sequence is that of Aminomethyltransferase from Legionella pneumophila (strain Lens).